Here is a 469-residue protein sequence, read N- to C-terminus: Citrate synthase, mitochondrial (469 aa).

Residues 1-31 constitute a mitochondrion transit peptide; the sequence is MTLLTASSRAAARLLGAKNSSCIIFAARHAS. Catalysis depends on residues H304 and H350. R359 provides a ligand contact to oxaloacetate. D405 is an active-site residue. Oxaloacetate contacts are provided by R431 and R451.

Belongs to the citrate synthase family. Homodimer.

The protein localises to the mitochondrion matrix. The enzyme catalyses oxaloacetate + acetyl-CoA + H2O = citrate + CoA + H(+). Its pathway is carbohydrate metabolism; tricarboxylic acid cycle; isocitrate from oxaloacetate: step 1/2. Key enzyme of the Krebs tricarboxylic acid cycle which catalyzes the synthesis of citrate from acetyl coenzyme A and oxaloacetate. This chain is Citrate synthase, mitochondrial (CS), found in Amblyrhynchus cristatus (Galapagos marine iguana).